We begin with the raw amino-acid sequence, 327 residues long: MTKEVLIHQIIDVLARAGFALSDRCNIRPRSFDVAARKDETLLLCKVLFNIDGLNEETAREMKYLAEYLGGSAIVVGAKTRDQMLEDSVVYMRYDILALNVQTLYDYFIENVPPLVSAAPGGLYVSIEGDILKKARMGQSMSLGTLASMVGVSRRTISKYEEEGMDASIDVVLQLEDIFGVELAKPINILKSCGSRKPRKKAESRTETQEKPYTLLPEDLILNTISMLGYDVLPTTQAPFKAISRDKSSVILTGVSEFNTTVVKRAHLMSSISCVTETQSVFIINGHSKIKSVENTVMIEKKELDKISDSQELLNFIEERRETHDEK.

The HTH cro/C1-type domain occupies 132-190 (LKKARMGQSMSLGTLASMVGVSRRTISKYEEEGMDASIDVVLQLEDIFGVELAKPINIL). A DNA-binding region (H-T-H motif) is located at residues 143 to 162 (LGTLASMVGVSRRTISKYEE).

This chain is Putative HTH-type transcriptional regulatory protein Mbar_A2318, found in Methanosarcina barkeri (strain Fusaro / DSM 804).